Here is a 92-residue protein sequence, read N- to C-terminus: Small ribosomal subunit protein uS19 (92 aa).

The protein belongs to the universal ribosomal protein uS19 family.

Protein S19 forms a complex with S13 that binds strongly to the 16S ribosomal RNA. This is Small ribosomal subunit protein uS19 from Clostridium botulinum (strain Eklund 17B / Type B).